The sequence spans 881 residues: MLEPFFKNYFNQSLTKYNSQVDAINNFGPMLSNLSDDEIRQRVQILKQQLLSNKNEADIICEVFAIVREATFRTLDIKHFDVQLIGGLVLNDGQIAEMKTGEGKTIVALLPTFLNALYGKGVHVVTVNDYLARRDAETVGRVHRFLGLTVGLIQEDMSPEERKQNYQCDVVYVTNNELGFDYLRDNMAFTQEEVVQRPLFYCVVDEVDSILIDEARTPLIISGPSEAPTQKYLQTSQLARVLQKNIHYIIDEKNQVVKLTDEGTLFCEQALKIADLYSPSDPWISYVLNSIKAKELFIRNTHYIVNVEEEVIIVDEFTGRTMAGRRWSDGLHQAIESKENLPIQDESQTLASITYQNLFLLYDKLSGMTGTAKTEELEFEKIYGLKVIPIPTHRDVKRKDFPDLVYKNQYLKWQAIANECIKMNEIDRPVLIGTTTIEKSELLAALLSEYNVPYRLLNARPENIESEAEIVSQAGCRGAITISTNMAGRGTDIALGGNLESLLKVKLKKFISDLVSADFSTVLKSAQFDEFLVSFVPVFETFGLSKLNESSVREDLLEYLNEGIIPDRSDITDFITAYNSFLKERAAILLEEKTLITKLGGLHVIGTERHESRRIDNQLRGRSGRQGDPGSSRFFLSLDDKLLRLFGGDQILNLLQNIGLEDDAPIQSPILTKSLESAQKKVEVYYFDSRKQLFEYDQALTMQRNGIYSERKRVLEKESLRDWIIEYGERSLYDITLAFSTNTNLALDKFFALKTQELLGMPYQVKWESAKGDINVLLNNLKHQFQVSYTLKEAQLEAIEPGIMRELERSFLLQQIDFSWKEHLQKISALRDSIRWRSYGQRDPLTDYKKESYSTFVTMLNRIRHQVIYFIFRSKITIDFE.

Residues Gln-83, 101-105, and Asp-492 each bind ATP; that span reads GEGKT.

It belongs to the SecA family.

It localises to the plastid. It is found in the chloroplast stroma. Its subcellular location is the chloroplast thylakoid membrane. It catalyses the reaction ATP + H2O + cellular proteinSide 1 = ADP + phosphate + cellular proteinSide 2.. Functionally, has a central role in coupling the hydrolysis of ATP to the transfer of proteins across the thylakoid membrane. In Emiliania huxleyi (Coccolithophore), this protein is Protein translocase subunit SecA.